The sequence spans 488 residues: MTSNSCLISLGLLLVLIQILAPAKAAEHSVFTHKNASSVLGQLVTSSTLVWESYDPKDATQLQFAVEGGKYVTEDEHYPMYVCRVPIDGIQVSGHTEKILQRHVCLAAHYKHGKYDNFDVLMNKGHLGKVGWRHWRKFDAGVPVGAIRIGDDSYIGRHRAPSQPNKDGVVTHWGADFNLGHLEPVGLGKIRVIEAEREKYYDDGEVLVETEPFRYELRDIKLDRLRTDIQENMTELVTRKLENLEDKYSTVETILSYTFNYNQYWGSHEGVARGLPTKIFEKDEAVPAEINWALKHTEKRSENKAVHTKLWPGTAINVTLRGNYVTLEAPYSGKLFAFYYGSDESVSRKISAEVRKSYLKEVKLEFSPVYWIENGTLVPTTTTTTTTSTSTTTHATTTSTNEPTPINEPPLVHMKDNGVQHSGPDTLEKTLHDSPSSNELNSHEAPENMSSDPGKDVALAGFGVNAAGSTFIAGSALLTLLLTIFLSL.

The first 21 residues, 1-21 (MTSNSCLISLGLLLVLIQILA), serve as a signal peptide directing secretion. Residues 22–465 (PAKAAEHSVF…DVALAGFGVN (444 aa)) lie on the Extracellular side of the membrane. N-linked (GlcNAc...) asparagine glycosylation is found at Asn35, Asn232, Asn317, and Asn374. Residues 380–400 (TTTTTTTTSTSTTTHATTTST) show a composition bias toward low complexity. A disordered region spans residues 380–453 (TTTTTTTTST…EAPENMSSDP (74 aa)). Asn448 carries an N-linked (GlcNAc...) asparagine glycan. The chain crosses the membrane as a helical span at residues 466-486 (AAGSTFIAGSALLTLLLTIFL). Residues 487–488 (SL) are Cytoplasmic-facing.

Its subcellular location is the membrane. Its function is as follows. Required for normal axon patterning during neurogenesis. This is Protein unzipped (uzip) from Drosophila melanogaster (Fruit fly).